The sequence spans 1377 residues: DNA-directed RNA polymerase subunit beta' (1377 aa).

4 residues coordinate Zn(2+): C60, C62, C75, and C78. Positions 449, 451, and 453 each coordinate Mg(2+). Residues C777, C851, C858, and C861 each contribute to the Zn(2+) site.

Belongs to the RNA polymerase beta' chain family. As to quaternary structure, the RNAP catalytic core consists of 2 alpha, 1 beta, 1 beta' and 1 omega subunit. When a sigma factor is associated with the core the holoenzyme is formed, which can initiate transcription. Requires Mg(2+) as cofactor. Zn(2+) is required as a cofactor.

The catalysed reaction is RNA(n) + a ribonucleoside 5'-triphosphate = RNA(n+1) + diphosphate. DNA-dependent RNA polymerase catalyzes the transcription of DNA into RNA using the four ribonucleoside triphosphates as substrates. This is DNA-directed RNA polymerase subunit beta' from Borrelia recurrentis (strain A1).